The following is a 204-amino-acid chain: Allurin (204 aa).

Positions 1-19 are cleaved as a signal peptide; it reads MDTFNFIICISALFHSTYG. One can recognise an SCP domain in the interval 36–138; it reads VDLHNLLRRS…DKMIGHYTQV (103 aa). The chain crosses the membrane as a helical span at residues 140–161; sequence WAKTYLLGCGLAFCPGNYYPYV.

It belongs to the CRISP family. Expressed only in oviduct.

The protein resides in the membrane. The protein localises to the secreted. Its function is as follows. Involved in sperm chemoattraction. The chain is Allurin (crisp-a) from Xenopus tropicalis (Western clawed frog).